We begin with the raw amino-acid sequence, 151 residues long: Centrin-A (151 aa).

2 EF-hand domains span residues 80-115 (DVYA…LGEA) and 116-151 (RSDS…KKIY). Asp-93, Asp-95, Ser-97, Tyr-99, Asp-104, Asp-129, Asn-131, Asp-133, Lys-135, and Glu-140 together coordinate Ca(2+).

Belongs to the centrin family.

It is found in the cytoplasm. It localises to the cytoskeleton. Its subcellular location is the microtubule organizing center. The protein resides in the centrosome. The protein localises to the nucleus. Its function is as follows. Plays a fundamental role in microtubule-organizing center structure and function. In Dictyostelium discoideum (Social amoeba), this protein is Centrin-A (cenA).